The chain runs to 337 residues: Ornithine carbamoyltransferase, catabolic (337 aa).

Residues 57-60 (STRT), Gln84, Arg108, and 135-138 (HPTQ) each bind carbamoyl phosphate. L-ornithine contacts are provided by residues Asn167, Asp231, and 235 to 236 (SM). Carbamoyl phosphate contacts are provided by residues 272–273 (CL) and Arg317.

This sequence belongs to the aspartate/ornithine carbamoyltransferase superfamily. OTCase family.

Its subcellular location is the cytoplasm. The enzyme catalyses carbamoyl phosphate + L-ornithine = L-citrulline + phosphate + H(+). Its pathway is amino-acid degradation; L-arginine degradation via ADI pathway; carbamoyl phosphate from L-arginine: step 2/2. In terms of biological role, reversibly catalyzes the transfer of the carbamoyl group from carbamoyl phosphate (CP) to the N(epsilon) atom of ornithine (ORN) to produce L-citrulline. The polypeptide is Ornithine carbamoyltransferase, catabolic (arcB) (Streptococcus pyogenes serotype M1).